The chain runs to 486 residues: Outer dynein arm-docking complex subunit 4 (486 aa).

TPR repeat units follow at residues 14 to 47 (FTTY…QPDD), 49 to 81 (NCLV…NKNY), and 82 to 115 (FKGL…RPEL). The interval 153 to 180 (GVHPQNLNPSNKKESKKHSKKTDKGEKT) is disordered. TPR repeat units lie at residues 314–347 (GNLH…AKKC), 354–387 (SRAL…ACGG), 391–424 (AWLF…ADDI), and 431–464 (LNAS…AKLL).

In terms of assembly, component of the outer dynein arm-docking complex along with ODAD1, ODAD2 and ODAD3.

Its subcellular location is the cytoplasm. It localises to the cytoskeleton. It is found in the cilium axoneme. Functionally, component of the outer dynein arm-docking complex (ODA-DC) that mediates outer dynein arms (ODA) binding onto the doublet microtubule. Plays an essential role for the assembly of ODA-DC and in the docking of ODA in ciliary axoneme. This is Outer dynein arm-docking complex subunit 4 (odad4) from Danio rerio (Zebrafish).